The following is an 80-amino-acid chain: Metallothionein-like protein type 2 (80 aa).

It belongs to the metallothionein superfamily. Type 15 family.

In terms of biological role, metallothioneins have a high content of cysteine residues that bind various heavy metals. This Brassica campestris (Field mustard) protein is Metallothionein-like protein type 2.